The primary structure comprises 617 residues: Elongation factor 4 (617 aa).

One can recognise a tr-type G domain in the interval 17-203; sequence ERIRNFCIIA…RVCELVPHPV (187 aa). GTP-binding positions include 29 to 34 and 150 to 153; these read DHGKST and NKID.

Belongs to the TRAFAC class translation factor GTPase superfamily. Classic translation factor GTPase family. LepA subfamily.

The protein localises to the cell membrane. The enzyme catalyses GTP + H2O = GDP + phosphate + H(+). Its function is as follows. Required for accurate and efficient protein synthesis under certain stress conditions. May act as a fidelity factor of the translation reaction, by catalyzing a one-codon backward translocation of tRNAs on improperly translocated ribosomes. Back-translocation proceeds from a post-translocation (POST) complex to a pre-translocation (PRE) complex, thus giving elongation factor G a second chance to translocate the tRNAs correctly. Binds to ribosomes in a GTP-dependent manner. The chain is Elongation factor 4 from Corynebacterium urealyticum (strain ATCC 43042 / DSM 7109).